We begin with the raw amino-acid sequence, 312 residues long: Glyoxylate/hydroxypyruvate reductase A (312 aa).

The active site involves Arg227. The active-site Proton donor is the His275.

This sequence belongs to the D-isomer specific 2-hydroxyacid dehydrogenase family. GhrA subfamily.

The protein resides in the cytoplasm. It carries out the reaction glycolate + NADP(+) = glyoxylate + NADPH + H(+). It catalyses the reaction (R)-glycerate + NAD(+) = 3-hydroxypyruvate + NADH + H(+). The catalysed reaction is (R)-glycerate + NADP(+) = 3-hydroxypyruvate + NADPH + H(+). In terms of biological role, catalyzes the NADPH-dependent reduction of glyoxylate and hydroxypyruvate into glycolate and glycerate, respectively. The polypeptide is Glyoxylate/hydroxypyruvate reductase A (Shigella dysenteriae serotype 1 (strain Sd197)).